The sequence spans 132 residues: ATP synthase epsilon chain (132 aa).

The protein belongs to the ATPase epsilon chain family. F-type ATPases have 2 components, CF(1) - the catalytic core - and CF(0) - the membrane proton channel. CF(1) has five subunits: alpha(3), beta(3), gamma(1), delta(1), epsilon(1). CF(0) has three main subunits: a, b and c.

It localises to the cell inner membrane. In terms of biological role, produces ATP from ADP in the presence of a proton gradient across the membrane. The protein is ATP synthase epsilon chain of Cereibacter sphaeroides (strain ATCC 17025 / ATH 2.4.3) (Rhodobacter sphaeroides).